The chain runs to 78 residues: RNA-binding protein Hfq (78 aa).

The region spanning 10–70 (DLFLNSVRKQ…ISTIMPSQPV (61 aa)) is the Sm domain.

This sequence belongs to the Hfq family. Homohexamer.

Its function is as follows. RNA chaperone that binds small regulatory RNA (sRNAs) and mRNAs to facilitate mRNA translational regulation in response to envelope stress, environmental stress and changes in metabolite concentrations. Also binds with high specificity to tRNAs. This Brucella abortus (strain S19) protein is RNA-binding protein Hfq.